The chain runs to 60 residues: Large ribosomal subunit protein bL32 (60 aa).

This sequence belongs to the bacterial ribosomal protein bL32 family.

The chain is Large ribosomal subunit protein bL32 from Streptococcus mutans serotype c (strain ATCC 700610 / UA159).